A 589-amino-acid polypeptide reads, in one-letter code: MVAPMYGSPGGRLARAVTRALALALVLALLVGLFLSGLTGAIPTPRGQRGRGMPVPPASRCRSLLLDPETGQLRLVDGRHPDAVAWANLTNAIRETGWAFLELHTNGRFNDSLQAYAAGVVEAAVSEELIYMYWMNTVVNYCGPFEYEVGYCERLKNFLEANLEWMQKEMELNNGSAYWHQVRLTLLQLKGLEDSYEGSVAFPTGKFTVKPLGFLLLQISGDLEDLEVALNKTKTNHAMGSGSCSALIKLLPGQRDLLVAHNTWHSYQYMLRIMKKYWFQFREGPQAESTRAPGNKVIFSSYPGTIFSCDDFYILGSGLVTLETTIGNKNPALWKYVQPTGCVLEWMRNVVANRLALDGDSWADIFKRFNSGTYNNQWMIVDYKAFVPGGPSPGRRVLTVLEQIPGMVVVADRTSELYQKTYWASYNIPSFESVFNASGLPALVARYGPWFSYDGSPRAQIFRRNHSLVHDLDSMMRLMRYNDFLHDPLSLCKACTPKPNGENAISARSDLNPANGSYPFQALHQRSHGGIDVKVTSTALAKALRLLAVSGPTWDQLPPFQWSTSPFSGMLHMGQPDLRKFSPIEVSWD.

An N-terminal signal peptide occupies residues methionine 1–alanine 41. N-linked (GlcNAc...) asparagine glycans are attached at residues asparagine 88 and asparagine 110. A disulfide bridge links cysteine 142 with cysteine 152. N-linked (GlcNAc...) asparagine glycosylation is found at asparagine 174, asparagine 231, asparagine 436, and asparagine 465. Cysteine 492 and cysteine 495 are joined by a disulfide. A glycan (N-linked (GlcNAc...) asparagine) is linked at asparagine 515.

It belongs to the phospholipase B-like family. Interacts with IGF2R. Glycosylated; contains mannose 6-phosphate sugars.

It localises to the lysosome lumen. Functionally, putative phospholipase. In Bos taurus (Bovine), this protein is Putative phospholipase B-like 2 (PLBD2).